The following is a 391-amino-acid chain: Saxitoxin and tetrodotoxin-binding protein 2 (391 aa).

The N-terminal stretch at 1–20 is a signal peptide; sequence MGAVPGVVLLLMLAVLGIRA. A run of 2 repeats spans residues 24–202 and 203–391. N-linked (GlcNAc...) asparagine glycans are attached at residues Asn-41, Asn-54, Asn-63, Asn-97, Asn-234, Asn-268, Asn-277, and Asn-307.

As to quaternary structure, homodimer or heterodimer of PSTBP1 and PSTBP2. In terms of processing, glycosylated.

The protein localises to the secreted. Its function is as follows. Binds both saxitoxin and tetradotoxin. May play a role in toxin accumulation and/or excretion. This is Saxitoxin and tetrodotoxin-binding protein 2 (psbp2) from Takifugu pardalis (Panther puffer).